The chain runs to 1364 residues: Serine protease SepA autotransporter (1364 aa).

The N-terminal stretch at 1–56 is a signal peptide; that stretch reads MNKIYYLKYCHITKSLIAVSELARRVTCKSHRRLSRRVILTSVAALSLSSAWPALS. The 251-residue stretch at 57–307 folds into the Peptidase S6 domain; it reads ATVSAEIPYQ…VVTTQDFLGQ (251 aa). Catalysis depends on charge relay system residues histidine 134, aspartate 162, and serine 267. Residues 1098–1364 form the Autotransporter domain; that stretch reads DTQGDAGVWA…AINANFRYVF (267 aa).

Post-translationally, cleaved to release the mature protein from the outer membrane. Cleavage is performed by an unknown protease.

The protein resides in the periplasm. Its subcellular location is the secreted. It localises to the cell surface. It is found in the cell outer membrane. Its activity is regulated as follows. Inhibited by the serine protease inhibitor PMSF, but not by benzamidine, alpha 1-antitrypsin, alpha 1-antichymotrypsin. Not inhibited by metalloprotease inhibitors such as EDTA and orthophenanthroline. Functionally, major protein secreted in laboratory media showing proteolytic activity. May be involved in invasion and destruction of host intestinal epithelium. The chain is Serine protease SepA autotransporter (sepA) from Shigella flexneri.